The following is a 299-amino-acid chain: Cold shock protein 1 (299 aa).

Residue A2 is modified to N-acetylalanine. Residues 12-76 enclose the CSD domain; that stretch reads TGKVNWFNAS…GKTKAVNVTA (65 aa). The interval 76–97 is disordered; the sequence is APGGGSLKKENNSRGNGARRGG. CCHC-type zinc fingers lie at residues 100-117, 132-149, 164-181, 198-215, 230-247, 253-270, and 280-297; these read SGCY…DCGI, EGCY…DCTS, DGCY…DCTQ, GTCY…DCAT, RGCY…DCDQ, and NACY…ECSS.

This sequence belongs to the cold shock protein (CSP) family. In terms of tissue distribution, mostly expressed in shoot apices and siliques, and, to a lower extent, in roots, cotyledons, stems, shoots, leaves, floral buds and flowers.

It is found in the nucleus. Its subcellular location is the cytoplasm. In terms of biological role, chaperone that binds to RNA, single- (ssDNA) and double-stranded (dsDNA) DNA, and unwinds nucleic acid duplex. Exhibits a DNA melting activity. May be involved in cold resistance. Prevents seed germination under dehydration or salt stress conditions. This Arabidopsis thaliana (Mouse-ear cress) protein is Cold shock protein 1 (CSP1).